A 230-amino-acid chain; its full sequence is uncharacterized protein (230 aa).

This is an uncharacterized protein from Mycobacterium tuberculosis (strain ATCC 25618 / H37Rv).